A 574-amino-acid polypeptide reads, in one-letter code: Proline--tRNA ligase (574 aa).

This sequence belongs to the class-II aminoacyl-tRNA synthetase family. ProS type 1 subfamily. Homodimer.

Its subcellular location is the cytoplasm. The catalysed reaction is tRNA(Pro) + L-proline + ATP = L-prolyl-tRNA(Pro) + AMP + diphosphate. Functionally, catalyzes the attachment of proline to tRNA(Pro) in a two-step reaction: proline is first activated by ATP to form Pro-AMP and then transferred to the acceptor end of tRNA(Pro). As ProRS can inadvertently accommodate and process non-cognate amino acids such as alanine and cysteine, to avoid such errors it has two additional distinct editing activities against alanine. One activity is designated as 'pretransfer' editing and involves the tRNA(Pro)-independent hydrolysis of activated Ala-AMP. The other activity is designated 'posttransfer' editing and involves deacylation of mischarged Ala-tRNA(Pro). The misacylated Cys-tRNA(Pro) is not edited by ProRS. In Marinomonas sp. (strain MWYL1), this protein is Proline--tRNA ligase.